A 417-amino-acid polypeptide reads, in one-letter code: Methyltransferase/ribosomally synthesized cyclic peptide lentinulin A precursor ledMA (417 aa).

A methyltransferase domain region spans residues 1–251 (METPTLNKSG…GVSTFYIPPK (251 aa)). Residues arginine 72, tyrosine 76, and tyrosine 98 contribute to the active site. Positions 98, 100, 103, 130, 172, 213, 244, and 245 each coordinate S-adenosyl-L-methionine. The tract at residues 252–378 (ERKEINVDII…WAFRCAMKEM (127 aa)) is clasp domain. A precursor leader region spans residues 379 to 399 (PISLLDNAKQSMEEASEQGFP). Isoleucine 401 is modified (N-methylisoleucine). N-methylvaline occurs at positions 403 and 404. Glycine 405 is modified (N-methylglycine). An N-methylvaline mark is found at valine 406 and valine 407. Glycine 408 carries the N-methylglycine modification. At valine 410 the chain carries N-methylvaline. An N-methylglycine modification is found at glycine 411. Valine 413 is subject to N-methylvaline.

It in the N-terminal section; belongs to the precorrin methyltransferase family. Homodimer. LedMA automethylates at Ile-401, Val-403, Val-404, Gly-405, Val-406, Val-407, Gly-408, Val-410, Gly-411 and Val-413 before being processed by the prolyloligopeptidase ledP which likely forms a peptidyl ester upon removal of the follower propeptide, which then undergoes macrocyclization with the N-terminus of the modified core peptide. Peptide backbone alpha-N-methylations change the physicochemical properties of amide bonds to provide structural constraints and other favorable characteristics including biological membrane permeability to peptides.

It participates in mycotoxin biosynthesis. Its function is as follows. Fusion protein of the methyltransferase ledM and the lentinulin A core peptide; part of the gene cluster that mediates the biosynthesis of lentinulin A, a highly methylated cyclic dodecapeptide with nematodicidal activity. Lentinulin A derives from the C-terminus of the ledMA protein, and it is the ledMA protein that methylates its own C-terminus using S-adenosyl methionine (SAM). The C-terminus is subsequently cleaved off and macrocyclized by the prolyloligopeptidase ledP to give the final product. This chain is Methyltransferase/ribosomally synthesized cyclic peptide lentinulin A precursor ledMA, found in Lentinula edodes (Shiitake mushroom).